Here is a 375-residue protein sequence, read N- to C-terminus: Queuine tRNA-ribosyltransferase (375 aa).

Catalysis depends on D89, which acts as the Proton acceptor. Substrate is bound by residues 89–93, D143, Q187, and G214; that span reads DSGGF. An RNA binding region spans residues 245 to 251; that stretch reads GVGKPED. D264 serves as the catalytic Nucleophile. The tract at residues 269-273 is RNA binding; important for wobble base 34 recognition; it reads TRNAR. Zn(2+) is bound by residues C302, C304, C307, and H333.

The protein belongs to the queuine tRNA-ribosyltransferase family. In terms of assembly, homodimer. Within each dimer, one monomer is responsible for RNA recognition and catalysis, while the other monomer binds to the replacement base PreQ1. The cofactor is Zn(2+).

The catalysed reaction is 7-aminomethyl-7-carbaguanine + guanosine(34) in tRNA = 7-aminomethyl-7-carbaguanosine(34) in tRNA + guanine. It participates in tRNA modification; tRNA-queuosine biosynthesis. In terms of biological role, catalyzes the base-exchange of a guanine (G) residue with the queuine precursor 7-aminomethyl-7-deazaguanine (PreQ1) at position 34 (anticodon wobble position) in tRNAs with GU(N) anticodons (tRNA-Asp, -Asn, -His and -Tyr). Catalysis occurs through a double-displacement mechanism. The nucleophile active site attacks the C1' of nucleotide 34 to detach the guanine base from the RNA, forming a covalent enzyme-RNA intermediate. The proton acceptor active site deprotonates the incoming PreQ1, allowing a nucleophilic attack on the C1' of the ribose to form the product. After dissociation, two additional enzymatic reactions on the tRNA convert PreQ1 to queuine (Q), resulting in the hypermodified nucleoside queuosine (7-(((4,5-cis-dihydroxy-2-cyclopenten-1-yl)amino)methyl)-7-deazaguanosine). In Citrobacter koseri (strain ATCC BAA-895 / CDC 4225-83 / SGSC4696), this protein is Queuine tRNA-ribosyltransferase.